The following is a 412-amino-acid chain: LMGVIYSTLAIAPVQFDREKVFRVKLQDEKQASILKNLTQTIELDFWYPDAIHDIAVNMTVDFRVTEKESQTIQSTLEQHKMDYEILINDLQEEIDKQFDVKEEIAGRHSYAKYNDWNKIVSWTEKMVEKHPEMVSRIKIGSTVEDNPLYVLKIGRKDGERKAIFMDCGIHAREWVSPAFCQWFVYQAAKSYGKNKIMTKLLDRMNFYVLPVFNVDGYIWSWTKDRMWRKNRSKNPNSTCIGTDLNRNFDVSWDSSPNTDNPCLSVYRGPAPESEKETKAVTNFIRSHLNSIKAYITFHSYSQMLLFPYGYTIKLPPNHQDLLKVARIATDVLSSRYETRYIYGPIASTIYKTSGSSLDWAYDLGIKHTFAFELRDKGKSGFLLPESRIKPTCKETMLSVKFIAKYILKHTS.

The first 10 residues, 1–10, serve as a signal peptide directing secretion; that stretch reads LMGVIYSTLA. Residues 11–104 constitute a propeptide, activation peptide; it reads IAPVQFDREK…IDKQFDVKEE (94 aa). A Peptidase M14 domain is found at 113-407; that stretch reads KYNDWNKIVS…LSVKFIAKYI (295 aa). Cystine bridges form between Cys168/Cys181 and Cys240/Cys263. 2 residues coordinate Zn(2+): His171 and Glu174. His299 serves as a coordination point for Zn(2+). The active-site Proton donor/acceptor is the Glu373.

This sequence belongs to the peptidase M14 family. Requires Zn(2+) as cofactor.

The protein resides in the cytoplasmic vesicle. Its subcellular location is the secretory vesicle. It carries out the reaction Release of a C-terminal amino acid, but little or no action with -Asp, -Glu, -Arg, -Lys or -Pro.. This chain is Mast cell carboxypeptidase A (Cpa3), found in Rattus norvegicus (Rat).